Here is a 260-residue protein sequence, read N- to C-terminus: Small ribosomal subunit protein cS22 (260 aa).

The N-terminal 62 residues, 1-62, are a transit peptide targeting the chloroplast; it reads MATISSILPC…TNPPLLKVRA (62 aa). Positions 63 to 78 are enriched in low complexity; that stretch reads VVTEETSSSSTASSSS. Positions 63–83 are disordered; that stretch reads VVTEETSSSSTASSSSDGEGA. 2 consecutive RRM domains span residues 84–162 and 184–260; these read RRLY…ITEK and YKVY…VNKA.

In terms of assembly, component of the chloroplast small ribosomal subunit (SSU). Mature 70S chloroplast ribosomes of higher plants consist of a small (30S) and a large (50S) subunit. The 30S small subunit contains 1 molecule of ribosomal RNA (16S rRNA) and 24 different proteins. The 50S large subunit contains 3 rRNA molecules (23S, 5S and 4.5S rRNA) and 33 different proteins.

It is found in the plastid. Its subcellular location is the chloroplast. In terms of biological role, component of the chloroplast ribosome (chloro-ribosome), a dedicated translation machinery responsible for the synthesis of chloroplast genome-encoded proteins, including proteins of the transcription and translation machinery and components of the photosynthetic apparatus. cS22 may have a role in the recruitment of stored chloroplast mRNAs for active protein synthesis. This chain is Small ribosomal subunit protein cS22 (PSRP2), found in Spinacia oleracea (Spinach).